The sequence spans 548 residues: Luciferin 4-monooxygenase (548 aa).

The Microbody targeting signal motif lies at 546 to 548 (AKM).

It belongs to the ATP-dependent AMP-binding enzyme family. Homodimer. Requires Mg(2+) as cofactor.

The protein localises to the peroxisome. The enzyme catalyses firefly D-luciferin + ATP + O2 = firefly oxyluciferin + hnu + AMP + CO2 + diphosphate. Inhibited by ATP analogs and sodium deoxycholate. Activated by choline-containing phospholipids. In terms of biological role, produces green light with a wavelength of 570 nm. This Luciola mingrelica (Southern Russian firefly) protein is Luciferin 4-monooxygenase.